Here is a 578-residue protein sequence, read N- to C-terminus: Thiol:disulfide interchange protein DsbD (578 aa).

An N-terminal signal peptide occupies residues 1-24 (MAQRFITLILLLCSILLAPHSAQA). 2 disulfide bridges follow: cysteine 134–cysteine 140 and cysteine 195–cysteine 317. The next 9 membrane-spanning stretches (helical) occupy residues 183–203 (ALLI…YPLI), 219–239 (ILLL…LLGL), 256–276 (YVLI…FGLY), 297–317 (GGSL…CSPC), 318–338 (TTAP…MLAG), 339–359 (GGTL…VTLF), 370–390 (WMQY…VFLL), 397–417 (VWGL…AFIL), and 421–441 (AHSG…LIAA). The region spanning 438 to 578 (LIAARPLQDW…FLQHLQNLPR (141 aa)) is the Thioredoxin domain. A disulfide bond links cysteine 493 and cysteine 496.

It belongs to the thioredoxin family. DsbD subfamily.

It is found in the cell inner membrane. It catalyses the reaction [protein]-dithiol + NAD(+) = [protein]-disulfide + NADH + H(+). It carries out the reaction [protein]-dithiol + NADP(+) = [protein]-disulfide + NADPH + H(+). Functionally, required to facilitate the formation of correct disulfide bonds in some periplasmic proteins and for the assembly of the periplasmic c-type cytochromes. Acts by transferring electrons from cytoplasmic thioredoxin to the periplasm. This transfer involves a cascade of disulfide bond formation and reduction steps. The protein is Thiol:disulfide interchange protein DsbD of Yersinia enterocolitica serotype O:8 / biotype 1B (strain NCTC 13174 / 8081).